Consider the following 493-residue polypeptide: Probable cytosol aminopeptidase (493 aa).

Mn(2+)-binding residues include K260 and D265. K272 is an active-site residue. 3 residues coordinate Mn(2+): D283, D342, and E344. R346 is a catalytic residue.

It belongs to the peptidase M17 family. Requires Mn(2+) as cofactor.

The protein localises to the cytoplasm. It catalyses the reaction Release of an N-terminal amino acid, Xaa-|-Yaa-, in which Xaa is preferably Leu, but may be other amino acids including Pro although not Arg or Lys, and Yaa may be Pro. Amino acid amides and methyl esters are also readily hydrolyzed, but rates on arylamides are exceedingly low.. It carries out the reaction Release of an N-terminal amino acid, preferentially leucine, but not glutamic or aspartic acids.. Its function is as follows. Presumably involved in the processing and regular turnover of intracellular proteins. Catalyzes the removal of unsubstituted N-terminal amino acids from various peptides. This chain is Probable cytosol aminopeptidase, found in Clostridium perfringens (strain 13 / Type A).